The sequence spans 540 residues: Chaperonin GroEL 1 (540 aa).

Residues 30 to 33 (TLGP), Lys51, 87 to 91 (DGTTT), Gly415, 480 to 482 (NAA), and Asp496 each bind ATP.

Belongs to the chaperonin (HSP60) family. In terms of assembly, forms a cylinder of 14 subunits composed of two heptameric rings stacked back-to-back. Interacts with the co-chaperonin GroES.

Its subcellular location is the cytoplasm. It catalyses the reaction ATP + H2O + a folded polypeptide = ADP + phosphate + an unfolded polypeptide.. Its function is as follows. Together with its co-chaperonin GroES, plays an essential role in assisting protein folding. The GroEL-GroES system forms a nano-cage that allows encapsulation of the non-native substrate proteins and provides a physical environment optimized to promote and accelerate protein folding. The protein is Chaperonin GroEL 1 of Bradyrhizobium diazoefficiens (strain JCM 10833 / BCRC 13528 / IAM 13628 / NBRC 14792 / USDA 110).